The following is a 104-amino-acid chain: uncharacterized protein (104 aa).

An N-terminal signal peptide occupies residues 1 to 25; it reads MVSSFFMASTLLAISSCFNSSISRA. Residues 79-99 form a helical membrane-spanning segment; it reads IPVVIVVEISSTLVLLLSAFL.

The protein localises to the membrane. This is an uncharacterized protein from Saccharomyces cerevisiae (strain ATCC 204508 / S288c) (Baker's yeast).